The following is an 883-amino-acid chain: Phosphoenolpyruvate carboxylase (883 aa).

Catalysis depends on residues His-138 and Lys-546.

This sequence belongs to the PEPCase type 1 family. The cofactor is Mg(2+).

It catalyses the reaction oxaloacetate + phosphate = phosphoenolpyruvate + hydrogencarbonate. Its function is as follows. Forms oxaloacetate, a four-carbon dicarboxylic acid source for the tricarboxylic acid cycle. This Klebsiella pneumoniae (strain 342) protein is Phosphoenolpyruvate carboxylase.